The primary structure comprises 413 residues: E3 ubiquitin-protein ligase makorin (413 aa).

2 consecutive C3H1-type zinc fingers follow at residues 2–29 (PRHETDCRYFANGYCSKGNTCTFTHDVA) and 30–57 (TRNENICHFNLVGKCSYGRACRFLHTRP). Residues 61 to 85 (ELPSCSTPQTSQNQQNLQNSGQRVR) are disordered. A compositionally biased stretch (low complexity) spans 66 to 82 (STPQTSQNQQNLQNSGQ). The C3H1-type 3 zinc finger occupies 138 to 167 (QAQLMMCPYHQKSGDCNRQDMDCPFAHGNY). The segment at 213–267 (CGICMENIFEKNLRFGILNGCQHCFCLDCIRQWRSKDQENVELATKTVRSCPECR) adopts an RING-type zinc-finger fold. The C3H1-type 4 zinc finger occupies 296–327 (NTKRKICKYYSNERSRGACPFGNKCFYKHQLP).

In terms of assembly, component of a complex at least containing lep-2, lin-28 and the long non-coding RNA lep-5, which mediates the degradation of lin-28. As to expression, expressed in seam, tail tip, and other hypodermal cells, head and tail neurons, the pharynx, intestine and the developing hermaphrodite somatic gonad. Not expressed in body wall muscle cells.

The protein resides in the cytoplasm. The enzyme catalyses S-ubiquitinyl-[E2 ubiquitin-conjugating enzyme]-L-cysteine + [acceptor protein]-L-lysine = [E2 ubiquitin-conjugating enzyme]-L-cysteine + N(6)-ubiquitinyl-[acceptor protein]-L-lysine.. It functions in the pathway protein modification; protein ubiquitination. Its function is as follows. E3 ubiquitin ligase which catalyzes the covalent attachment of ubiquitin moieties onto substrate proteins. Promotes the larval to adult transition by binding to the long non-coding RNA lep-5 to target the heterochronic protein lin-28 for degradation by the proteasome. This association and degradation of lin-28 also controls the timing of the sexual differentiation of individual neurons in males including the AIM, AWA, ADF, ASJ and CEM neurons. Plays a role in governing the developmental timing of male tail tip morphogenesis. Plays a role in two aspects of male mating behavior: response to hermaphrodite contact and vulva location. May play a role in the detection of preferred food sources. This Caenorhabditis elegans protein is E3 ubiquitin-protein ligase makorin.